The sequence spans 482 residues: MPEFTVTEISGEVKRTLEGSFGRIRVRGEVGRVFQARSGHLYYDIKDDRNVLACTTWKGQVASLSVVPEEGLEVVVTGRLTAFGAQSKYNLNVDEVAVAGQGALMALLEKRKKQLEAEGLFAPERKRPLPYLPQIIGVITSPQGAVIRDILHRLRDRFPRKVLIWPVAVQGANCAPEVARAIEGFNMFSPGGALPRPDLLIVARGGGSIEDLWGFNEEIVARAAAASQIPLISAVGHETDTTLIDFVSDRRAPTPTAAAEMAVPVRLELLAWTGEQGARLSRAASDAVQRRAQRLRDLSRALPRPDSLLDTPRQRLDRAAERLPAALTQGVQRRRLRLAELSAPLRPASLRALVSARRDHLAHLGSRLSPRALEREIAAQGERLTRLSDRLNSAQTTRIERLRQRLESADRLRETLGYKATLARGYAVVRDDQGALLTTRAQAAKAAALQIEFADGTLDTGGAPAKPASKPKQKPPEQGSLF.

The segment at 457–482 (TLDTGGAPAKPASKPKQKPPEQGSLF) is disordered.

Belongs to the XseA family. Heterooligomer composed of large and small subunits.

It is found in the cytoplasm. It carries out the reaction Exonucleolytic cleavage in either 5'- to 3'- or 3'- to 5'-direction to yield nucleoside 5'-phosphates.. In terms of biological role, bidirectionally degrades single-stranded DNA into large acid-insoluble oligonucleotides, which are then degraded further into small acid-soluble oligonucleotides. This chain is Exodeoxyribonuclease 7 large subunit, found in Ruegeria pomeroyi (strain ATCC 700808 / DSM 15171 / DSS-3) (Silicibacter pomeroyi).